The primary structure comprises 295 residues: Aspartate carbamoyltransferase catalytic subunit (295 aa).

Carbamoyl phosphate is bound by residues R49 and T50. K77 is an L-aspartate binding site. 3 residues coordinate carbamoyl phosphate: R99, H127, and Q130. R161 and R212 together coordinate L-aspartate. Positions 251 and 252 each coordinate carbamoyl phosphate.

Belongs to the aspartate/ornithine carbamoyltransferase superfamily. ATCase family. In terms of assembly, heterododecamer (2C3:3R2) of six catalytic PyrB chains organized as two trimers (C3), and six regulatory PyrI chains organized as three dimers (R2).

It carries out the reaction carbamoyl phosphate + L-aspartate = N-carbamoyl-L-aspartate + phosphate + H(+). It functions in the pathway pyrimidine metabolism; UMP biosynthesis via de novo pathway; (S)-dihydroorotate from bicarbonate: step 2/3. Functionally, catalyzes the condensation of carbamoyl phosphate and aspartate to form carbamoyl aspartate and inorganic phosphate, the committed step in the de novo pyrimidine nucleotide biosynthesis pathway. The chain is Aspartate carbamoyltransferase catalytic subunit from Campylobacter jejuni subsp. jejuni serotype O:23/36 (strain 81-176).